Consider the following 274-residue polypeptide: Glutamate--cysteine ligase regulatory subunit (274 aa).

Ser-59 bears the Phosphoserine mark. An N6-acetyllysine modification is found at Lys-263.

Belongs to the aldo/keto reductase family. Glutamate--cysteine ligase light chain subfamily. As to quaternary structure, heterodimer of a catalytic heavy chain and a regulatory light chain.

It functions in the pathway sulfur metabolism; glutathione biosynthesis; glutathione from L-cysteine and L-glutamate: step 1/2. This Bos taurus (Bovine) protein is Glutamate--cysteine ligase regulatory subunit (GCLM).